Consider the following 89-residue polypeptide: Small ribosomal subunit protein uS15 (89 aa).

This sequence belongs to the universal ribosomal protein uS15 family. As to quaternary structure, part of the 30S ribosomal subunit. Forms a bridge to the 50S subunit in the 70S ribosome, contacting the 23S rRNA.

One of the primary rRNA binding proteins, it binds directly to 16S rRNA where it helps nucleate assembly of the platform of the 30S subunit by binding and bridging several RNA helices of the 16S rRNA. Functionally, forms an intersubunit bridge (bridge B4) with the 23S rRNA of the 50S subunit in the ribosome. In Carboxydothermus hydrogenoformans (strain ATCC BAA-161 / DSM 6008 / Z-2901), this protein is Small ribosomal subunit protein uS15.